The chain runs to 372 residues: Transaldolase 2 (372 aa).

Lysine 140 (schiff-base intermediate with substrate) is an active-site residue.

This sequence belongs to the transaldolase family. Type 2 subfamily.

It localises to the cytoplasm. It carries out the reaction D-sedoheptulose 7-phosphate + D-glyceraldehyde 3-phosphate = D-erythrose 4-phosphate + beta-D-fructose 6-phosphate. Its pathway is carbohydrate degradation; pentose phosphate pathway; D-glyceraldehyde 3-phosphate and beta-D-fructose 6-phosphate from D-ribose 5-phosphate and D-xylulose 5-phosphate (non-oxidative stage): step 2/3. Functionally, transaldolase is important for the balance of metabolites in the pentose-phosphate pathway. In Streptomyces coelicolor (strain ATCC BAA-471 / A3(2) / M145), this protein is Transaldolase 2.